The sequence spans 388 residues: Probable RNA-binding protein sce3 (388 aa).

The segment at E18–D84 is disordered. The segment covering D38–S50 has biased composition (polar residues). Phosphoserine occurs at positions 49, 50, and 60. T61 is modified (phosphothreonine). Residues S64, S67, and S71 each carry the phosphoserine modification. An RRM domain is found at F94 to P169. Residues R171–R185 are compositionally biased toward basic and acidic residues. The disordered stretch occupies residues R171–H388. Phosphoserine is present on S197. The span at R208–R229 shows a compositional bias: basic and acidic residues. The span at P248 to E257 shows a compositional bias: polar residues. Residues S250, S251, and S252 each carry the phosphoserine modification. Over residues A258–S268 the composition is skewed to low complexity. A compositionally biased stretch (basic and acidic residues) spans R289–E349. Phosphoserine is present on S347.

It localises to the cytoplasm. The polypeptide is Probable RNA-binding protein sce3 (sce3) (Schizosaccharomyces pombe (strain 972 / ATCC 24843) (Fission yeast)).